The primary structure comprises 726 residues: Mitotic spindle checkpoint protein MAD1 (726 aa).

Positions 1 to 30 (MILRTPQPKRLRSDAGESPFPTGATGSGNQ) are disordered. Coiled-coil stretches lie at residues 68 to 246 (ADVL…LKLI) and 272 to 625 (SDNS…VFAD).

It belongs to the MAD1 family. As to quaternary structure, homodimer. Part of the mitotic checkpoint complex (MCC). Interacts with MAD2 and NUA.

It localises to the nucleus envelope. Its function is as follows. Required for the execution of the mitotic checkpoint which monitors the process of kinetochore-spindle attachment and delays the onset of anaphase when this process is not complete. It inhibits the activity of the anaphase promoting complex by sequestering CDC20 until all chromosomes are aligned at the metaphase plate. Required for anchoring MAD2 to the nuclear envelope. The sequence is that of Mitotic spindle checkpoint protein MAD1 from Arabidopsis thaliana (Mouse-ear cress).